Reading from the N-terminus, the 102-residue chain is Co-chaperonin GroES (102 aa).

It belongs to the GroES chaperonin family. Heptamer of 7 subunits arranged in a ring. Interacts with the chaperonin GroEL.

It is found in the cytoplasm. In terms of biological role, together with the chaperonin GroEL, plays an essential role in assisting protein folding. The GroEL-GroES system forms a nano-cage that allows encapsulation of the non-native substrate proteins and provides a physical environment optimized to promote and accelerate protein folding. GroES binds to the apical surface of the GroEL ring, thereby capping the opening of the GroEL channel. This is Co-chaperonin GroES from Chlamydia felis (strain Fe/C-56) (Chlamydophila felis).